The primary structure comprises 183 residues: Glutathione-regulated potassium-efflux system ancillary protein KefG (183 aa).

Belongs to the NAD(P)H dehydrogenase (quinone) family. KefG subfamily. In terms of assembly, interacts with KefB.

Its subcellular location is the cell inner membrane. It catalyses the reaction a quinone + NADH + H(+) = a quinol + NAD(+). The catalysed reaction is a quinone + NADPH + H(+) = a quinol + NADP(+). In terms of biological role, regulatory subunit of a potassium efflux system that confers protection against electrophiles. Required for full activity of KefB. The polypeptide is Glutathione-regulated potassium-efflux system ancillary protein KefG (Yersinia pestis bv. Antiqua (strain Angola)).